Reading from the N-terminus, the 453-residue chain is Glutamyl-tRNA(Gln) amidotransferase subunit A (453 aa).

Active-site charge relay system residues include Lys-56 and Ser-131. The active-site Acyl-ester intermediate is Ser-155.

Belongs to the amidase family. GatA subfamily. In terms of assembly, heterotrimer of A, B and C subunits.

The enzyme catalyses L-glutamyl-tRNA(Gln) + L-glutamine + ATP + H2O = L-glutaminyl-tRNA(Gln) + L-glutamate + ADP + phosphate + H(+). Its function is as follows. Allows the formation of correctly charged Gln-tRNA(Gln) through the transamidation of misacylated Glu-tRNA(Gln) in organisms which lack glutaminyl-tRNA synthetase. The reaction takes place in the presence of glutamine and ATP through an activated gamma-phospho-Glu-tRNA(Gln). The chain is Glutamyl-tRNA(Gln) amidotransferase subunit A from Campylobacter fetus subsp. fetus (strain 82-40).